The following is a 940-amino-acid chain: Isoleucine--tRNA ligase (940 aa).

A 'HIGH' region motif is present at residues 58–68 (PYANGSIHIGH). Glutamate 564 is a binding site for L-isoleucyl-5'-AMP. A 'KMSKS' region motif is present at residues 605 to 609 (KMSKS). Lysine 608 provides a ligand contact to ATP. Positions 903, 906, 923, and 926 each coordinate Zn(2+).

The protein belongs to the class-I aminoacyl-tRNA synthetase family. IleS type 1 subfamily. In terms of assembly, monomer. The cofactor is Zn(2+).

The protein resides in the cytoplasm. The enzyme catalyses tRNA(Ile) + L-isoleucine + ATP = L-isoleucyl-tRNA(Ile) + AMP + diphosphate. Functionally, catalyzes the attachment of isoleucine to tRNA(Ile). As IleRS can inadvertently accommodate and process structurally similar amino acids such as valine, to avoid such errors it has two additional distinct tRNA(Ile)-dependent editing activities. One activity is designated as 'pretransfer' editing and involves the hydrolysis of activated Val-AMP. The other activity is designated 'posttransfer' editing and involves deacylation of mischarged Val-tRNA(Ile). The polypeptide is Isoleucine--tRNA ligase (Shewanella oneidensis (strain ATCC 700550 / JCM 31522 / CIP 106686 / LMG 19005 / NCIMB 14063 / MR-1)).